Consider the following 64-residue polypeptide: DNA-binding protein 7 (64 aa).

Lys-5 and Lys-7 each carry N6-methyllysine.

Belongs to the 7 kDa DNA-binding/endoribonuclease P2 family. As to quaternary structure, monomer.

It localises to the cytoplasm. Can constrain negative DNA supercoils. May be involved in maintaining the integrity of the genome at high temperature. The chain is DNA-binding protein 7 from Sulfurisphaera tokodaii (strain DSM 16993 / JCM 10545 / NBRC 100140 / 7) (Sulfolobus tokodaii).